We begin with the raw amino-acid sequence, 141 residues long: Lutropin subunit beta (141 aa).

A signal peptide spans 1 to 20 (MEMLQGLLLWLLLSVAGVWA). At Ser21 the chain carries Blocked amino end (Ser). Intrachain disulfides connect Cys29-Cys77, Cys43-Cys92, Cys46-Cys130, Cys54-Cys108, Cys58-Cys110, and Cys113-Cys120. N-linked (GlcNAc...) asparagine glycosylation is present at Asn33.

It belongs to the glycoprotein hormones subunit beta family. As to quaternary structure, heterodimer of a common alpha chain and a unique beta chain which confers biological specificity to thyrotropin, lutropin, follitropin and gonadotropin.

The protein localises to the secreted. Promotes spermatogenesis and ovulation by stimulating the testes and ovaries to synthesize steroids. The protein is Lutropin subunit beta (LHB) of Sus scrofa (Pig).